The primary structure comprises 129 residues: C-type natriuretic peptide 1 (129 aa).

Residues 1 to 24 (MSYKRGTCLGFIMLLMVSHHHTKG) form the signal peptide. The propeptide occupies 25–107 (KPLSSLQNLS…SRRYRQRNKK (83 aa)). A disulfide bridge links Cys-113 with Cys-129.

Belongs to the natriuretic peptide family.

It localises to the secreted. Functionally, hormone which plays a role in endochondral ossification through regulation of cartilaginous growth plate chondrocytes proliferation and differentiation. May also be vasoactive and natriuretic. May be important for freshwater adaptation. The chain is C-type natriuretic peptide 1 from Aquarana catesbeiana (American bullfrog).